Reading from the N-terminus, the 254-residue chain is 4-hydroxy-tetrahydrodipicolinate reductase (254 aa).

Position 7–12 (7–12) interacts with NAD(+); it reads GASGRI. Arg35 provides a ligand contact to NADP(+). NAD(+) contacts are provided by residues 91–93 and 115–118; these read GTT and AHNM. The active-site Proton donor/acceptor is the His147. A (S)-2,3,4,5-tetrahydrodipicolinate-binding site is contributed by His148. Lys151 serves as the catalytic Proton donor. Residue 157–158 coordinates (S)-2,3,4,5-tetrahydrodipicolinate; sequence GT.

It belongs to the DapB family.

The protein resides in the cytoplasm. It catalyses the reaction (S)-2,3,4,5-tetrahydrodipicolinate + NAD(+) + H2O = (2S,4S)-4-hydroxy-2,3,4,5-tetrahydrodipicolinate + NADH + H(+). The enzyme catalyses (S)-2,3,4,5-tetrahydrodipicolinate + NADP(+) + H2O = (2S,4S)-4-hydroxy-2,3,4,5-tetrahydrodipicolinate + NADPH + H(+). Its pathway is amino-acid biosynthesis; L-lysine biosynthesis via DAP pathway; (S)-tetrahydrodipicolinate from L-aspartate: step 4/4. Functionally, catalyzes the conversion of 4-hydroxy-tetrahydrodipicolinate (HTPA) to tetrahydrodipicolinate. The sequence is that of 4-hydroxy-tetrahydrodipicolinate reductase from Helicobacter pylori (strain G27).